Consider the following 160-residue polypeptide: Cyclic pyranopterin monophosphate synthase (160 aa).

Substrate is bound by residues 75–77 (LCH) and 113–114 (ME). The active site involves Asp-128.

It belongs to the MoaC family. As to quaternary structure, homohexamer; trimer of dimers.

It catalyses the reaction (8S)-3',8-cyclo-7,8-dihydroguanosine 5'-triphosphate = cyclic pyranopterin phosphate + diphosphate. It functions in the pathway cofactor biosynthesis; molybdopterin biosynthesis. Functionally, catalyzes the conversion of (8S)-3',8-cyclo-7,8-dihydroguanosine 5'-triphosphate to cyclic pyranopterin monophosphate (cPMP). The protein is Cyclic pyranopterin monophosphate synthase of Haemophilus influenzae (strain PittEE).